The sequence spans 450 residues: C4-dicarboxylate transport protein (450 aa).

A run of 8 helical transmembrane segments spans residues 25 to 45 (VVFA…YGAA), 56 to 76 (LIKM…IASM), 90 to 110 (MAYF…VANV), 162 to 182 (ILQV…VGDA), 200 to 220 (LVNI…AFTI), 234 to 254 (LVLT…GAVA), 319 to 339 (IYMT…LTLG), and 367 to 387 (AATL…ILGV).

Belongs to the dicarboxylate/amino acid:cation symporter (DAACS) (TC 2.A.23) family.

The protein localises to the cell inner membrane. In terms of biological role, responsible for the transport of dicarboxylates such as succinate, fumarate, and malate from the periplasm across the membrane. This Acidovorax ebreus (strain TPSY) (Diaphorobacter sp. (strain TPSY)) protein is C4-dicarboxylate transport protein.